Here is a 366-residue protein sequence, read N- to C-terminus: Putative agmatine deiminase (366 aa).

Residue Cys357 is the Amidino-cysteine intermediate of the active site.

It belongs to the agmatine deiminase family.

It carries out the reaction agmatine + H2O = N-carbamoylputrescine + NH4(+). This is Putative agmatine deiminase from Lactococcus lactis subsp. lactis (strain IL1403) (Streptococcus lactis).